Consider the following 1286-residue polypeptide: Ankyrin-repeat and fibronectin type III domain-containing 1 (1286 aa).

ANK repeat units follow at residues 274-303 and 311-340; these read QGNE…PEEL and EGLT…RESP. The region spanning 411-507 is the Fibronectin type-III domain; sequence VPANACLMVS…TTTPVCASPS (97 aa). Residues 748–755 are highly conserved peptide sequence; the sequence is GLYLGYLK. The segment covering 999–1011 has biased composition (polar residues); the sequence is SSHIDCLPSTSPS. Disordered regions lie at residues 999 to 1032, 1086 to 1106, 1187 to 1207, and 1242 to 1286; these read SSHI…EEGC, KASM…DTDH, AEDP…RGLP, and AGQD…SSML. A compositionally biased stretch (low complexity) spans 1260–1277; that stretch reads SSLPSSTSSEMSPDPTSP.

As to expression, expressed in both the suprachiasmatic nucleus and dorsal medial hypothalamus.

Functionally, may play a role in neuronal function. This chain is Ankyrin-repeat and fibronectin type III domain-containing 1, found in Mus musculus (Mouse).